Consider the following 632-residue polypeptide: tRNA uridine 5-carboxymethylaminomethyl modification enzyme MnmG (632 aa).

Gly-13–Gly-18 is a binding site for FAD. Gly-273–Phe-287 contributes to the NAD(+) binding site.

The protein belongs to the MnmG family. Homodimer. Heterotetramer of two MnmE and two MnmG subunits. It depends on FAD as a cofactor.

The protein resides in the cytoplasm. In terms of biological role, NAD-binding protein involved in the addition of a carboxymethylaminomethyl (cmnm) group at the wobble position (U34) of certain tRNAs, forming tRNA-cmnm(5)s(2)U34. This Psychrobacter arcticus (strain DSM 17307 / VKM B-2377 / 273-4) protein is tRNA uridine 5-carboxymethylaminomethyl modification enzyme MnmG.